Here is a 156-residue protein sequence, read N- to C-terminus: ATP synthase subunit b (156 aa).

Residues 7–27 traverse the membrane as a helical segment; the sequence is FFAQMVVFFILWWVVAKFIWP.

This sequence belongs to the ATPase B chain family. F-type ATPases have 2 components, F(1) - the catalytic core - and F(0) - the membrane proton channel. F(1) has five subunits: alpha(3), beta(3), gamma(1), delta(1), epsilon(1). F(0) has three main subunits: a(1), b(2) and c(10-14). The alpha and beta chains form an alternating ring which encloses part of the gamma chain. F(1) is attached to F(0) by a central stalk formed by the gamma and epsilon chains, while a peripheral stalk is formed by the delta and b chains.

The protein resides in the cell inner membrane. Its function is as follows. F(1)F(0) ATP synthase produces ATP from ADP in the presence of a proton or sodium gradient. F-type ATPases consist of two structural domains, F(1) containing the extramembraneous catalytic core and F(0) containing the membrane proton channel, linked together by a central stalk and a peripheral stalk. During catalysis, ATP synthesis in the catalytic domain of F(1) is coupled via a rotary mechanism of the central stalk subunits to proton translocation. Component of the F(0) channel, it forms part of the peripheral stalk, linking F(1) to F(0). This chain is ATP synthase subunit b, found in Cupriavidus taiwanensis (strain DSM 17343 / BCRC 17206 / CCUG 44338 / CIP 107171 / LMG 19424 / R1) (Ralstonia taiwanensis (strain LMG 19424)).